The chain runs to 305 residues: Dermonecrotic toxin LiSicTox-alphaII1 (305 aa).

The signal sequence occupies residues 1 to 18 (MLLHIALILGCWSVFSEG). A propeptide spanning residues 19–26 (AETDVAER) is cleaved from the precursor. His38 is a catalytic residue. Mg(2+) is bound by residues Glu58 and Asp60. The Nucleophile role is filled by His74. Cystine bridges form between Cys78/Cys84 and Cys80/Cys223. Asp118 contributes to the Mg(2+) binding site.

The protein belongs to the arthropod phospholipase D family. Class II subfamily. Class IIa sub-subfamily. The cofactor is Mg(2+). Expressed by the venom gland.

It localises to the secreted. It carries out the reaction an N-(acyl)-sphingosylphosphocholine = an N-(acyl)-sphingosyl-1,3-cyclic phosphate + choline. The catalysed reaction is an N-(acyl)-sphingosylphosphoethanolamine = an N-(acyl)-sphingosyl-1,3-cyclic phosphate + ethanolamine. The enzyme catalyses a 1-acyl-sn-glycero-3-phosphocholine = a 1-acyl-sn-glycero-2,3-cyclic phosphate + choline. It catalyses the reaction a 1-acyl-sn-glycero-3-phosphoethanolamine = a 1-acyl-sn-glycero-2,3-cyclic phosphate + ethanolamine. In terms of biological role, dermonecrotic toxins cleave the phosphodiester linkage between the phosphate and headgroup of certain phospholipids (sphingolipid and lysolipid substrates), forming an alcohol (often choline) and a cyclic phosphate. This toxin acts on sphingomyelin (SM) wih high activity. It may also act on ceramide phosphoethanolamine (CPE), lysophosphatidylcholine (LPC) and lysophosphatidylethanolamine (LPE), but not on lysophosphatidylserine (LPS), and lysophosphatidylglycerol (LPG). It acts by transphosphatidylation, releasing exclusively cyclic phosphate products as second products. Shows high hemolytic activity. Causes dermonecrosis, induces inflammatory response, platelet aggregation and increases vessel permeability. Shows no lethality when injected at higher dose into mice. May cause complement-dependent hemolysis as well as in a complement-independent manner. The hemolysis provoked in a complement-independent manner may be composed of several steps. The toxin may bind to erythrocyte membranes, may hydrolyze membrane phospholipids (SM and LPC) thus generating metabolism products that may cause hemolysis, probably by provoking an increase of calcium inside cells. The calcium influx may be due to the opening of L-type calcium channels, since L-type calcium channel blockers inhibit calcium influx. The polypeptide is Dermonecrotic toxin LiSicTox-alphaII1 (Loxosceles intermedia (Brown spider)).